The following is a 170-amino-acid chain: Sec-independent protein translocase protein TatB (170 aa).

A helical membrane pass occupies residues 1 to 21; it reads MIDLGISKLALIGAVALIVIG.

This sequence belongs to the TatB family. The Tat system comprises two distinct complexes: a TatABC complex, containing multiple copies of TatA, TatB and TatC subunits, and a separate TatA complex, containing only TatA subunits. Substrates initially bind to the TatABC complex, which probably triggers association of the separate TatA complex to form the active translocon.

It localises to the cell inner membrane. In terms of biological role, part of the twin-arginine translocation (Tat) system that transports large folded proteins containing a characteristic twin-arginine motif in their signal peptide across membranes. Together with TatC, TatB is part of a receptor directly interacting with Tat signal peptides. TatB may form an oligomeric binding site that transiently accommodates folded Tat precursor proteins before their translocation. The polypeptide is Sec-independent protein translocase protein TatB (Cupriavidus necator (strain ATCC 17699 / DSM 428 / KCTC 22496 / NCIMB 10442 / H16 / Stanier 337) (Ralstonia eutropha)).